Consider the following 176-residue polypeptide: Large ribosomal subunit protein uL6 (176 aa).

Positions 151-170 (RPPEPYKGKGVRYADEQVRR) are enriched in basic and acidic residues. Residues 151–176 (RPPEPYKGKGVRYADEQVRRKEAKKK) form a disordered region.

It belongs to the universal ribosomal protein uL6 family. As to quaternary structure, part of the 50S ribosomal subunit.

Its function is as follows. This protein binds to the 23S rRNA, and is important in its secondary structure. It is located near the subunit interface in the base of the L7/L12 stalk, and near the tRNA binding site of the peptidyltransferase center. In Shewanella piezotolerans (strain WP3 / JCM 13877), this protein is Large ribosomal subunit protein uL6.